Consider the following 130-residue polypeptide: NADH-ubiquinone oxidoreductase chain 1 (130 aa).

The helical transmembrane segment at 45–65 (SILFMSLFSVMFCLVVYSYLW) threads the bilayer.

This sequence belongs to the complex I subunit 1 family.

It localises to the mitochondrion inner membrane. It catalyses the reaction a ubiquinone + NADH + 5 H(+)(in) = a ubiquinol + NAD(+) + 4 H(+)(out). In terms of biological role, core subunit of the mitochondrial membrane respiratory chain NADH dehydrogenase (Complex I) that is believed to belong to the minimal assembly required for catalysis. Complex I functions in the transfer of electrons from NADH to the respiratory chain. The immediate electron acceptor for the enzyme is believed to be ubiquinone. This Artemia salina (Brine shrimp) protein is NADH-ubiquinone oxidoreductase chain 1 (ND1).